A 286-amino-acid polypeptide reads, in one-letter code: Aquaporin PIP1-1 (286 aa).

Positions 1 to 34 are disordered; that stretch reads MEGKEEDVRLGANKFSERQPIGTAAQSDKGYKEP. Over 1 to 54 the chain is Cytoplasmic; the sequence is MEGKEEDVRLGANKFSERQPIGTAAQSDKGYKEPPPAPLFEPGELTSWSFYRAG. A helical transmembrane segment spans residues 55-75; the sequence is IAEFMATFLFLYITILTVMGV. Residues 76 to 88 are Extracellular-facing; the sequence is VKSNSKCSTVGIQ. The chain crosses the membrane as a helical span at residues 89–109; sequence GIAWAFGGMIFALVYCTAGIS. Residues 110-131 lie on the Cytoplasmic side of the membrane; the sequence is GGHINPAVTFGLFLARKLSLTR. The NPA 1 motif lies at 114–116; that stretch reads NPA. The chain crosses the membrane as a helical span at residues 132–152; sequence ALFYMVMQCLGAICGAGVVKG. The Extracellular portion of the chain corresponds to 153-174; sequence YQKGLYESNGGGANVVAPGYTK. A helical membrane pass occupies residues 175 to 195; that stretch reads GDGLGAEIVGTFILVYTVFSA. Over 196–208 the chain is Cytoplasmic; it reads TDAKRNARDSHVP. The chain crosses the membrane as a helical span at residues 209–229; that stretch reads ILAPLPIGFAVFLVHLATIPI. Residues 230–256 lie on the Extracellular side of the membrane; it reads TGTGINPARSLGAAIIYNKKHAWDDHW. Positions 235–237 match the NPA 2 motif; that stretch reads NPA. Residues 257–277 traverse the membrane as a helical segment; the sequence is IFWVGPFIGAALAAIYHQIVI. Topologically, residues 278–286 are cytoplasmic; the sequence is RAIPFKSRP.

Belongs to the MIP/aquaporin (TC 1.A.8) family. PIP (TC 1.A.8.11) subfamily. In terms of tissue distribution, expressed in leaves, roots, stems, flowers and fruits, with highest levels in roots.

It localises to the cell membrane. Water channel required to facilitate the transport of water across cell membrane; mercury-insensitive. Promotes primary root elongation and root hair formation. Contributes to the tolerance to multiple abiotic stresses including salt (NaCl), cold and water deprivation, by modulating cytosolic K(+)/Na(+) ratio, maintaining osmotic balance, and reducing membrane injury (e.g. oxidative injury). Also regulates the expression of abscisic acid (ABA)-responsive genes during dehydration and salt stresses. The polypeptide is Aquaporin PIP1-1 (Musa acuminata (Banana)).